The sequence spans 294 residues: Transmembrane protein 178B (294 aa).

Positions 1–23 (MAAGRLLLYTGLSLALCALGMLA) are cleaved as a signal peptide. Asn-148 and Asn-152 each carry an N-linked (GlcNAc...) asparagine glycan. A run of 3 helical transmembrane segments spans residues 172-192 (AGFMGMAVAIILFGWIIGVLG), 206-226 (LLFLMGGTFCIISLCTCVAGI), and 252-272 (MFCAWGGLGLTLISGFFCTLA).

The protein belongs to the TMEM178 family.

The protein localises to the membrane. The polypeptide is Transmembrane protein 178B (TMEM178B) (Homo sapiens (Human)).